We begin with the raw amino-acid sequence, 154 residues long: Transcriptional repressor NrdR (154 aa).

A zinc finger spans residues Cys-3–Cys-34. One can recognise an ATP-cone domain in the interval Pro-49–Glu-139.

The protein belongs to the NrdR family. Zn(2+) serves as cofactor.

Negatively regulates transcription of bacterial ribonucleotide reductase nrd genes and operons by binding to NrdR-boxes. This is Transcriptional repressor NrdR from Ralstonia pickettii (strain 12J).